The sequence spans 547 residues: Serine/threonine-protein kinase pkn3 (547 aa).

The Protein kinase domain maps to Tyr18–Val288. ATP-binding positions include Ile24 to Val32 and Lys47. Catalysis depends on Asp142, which acts as the Proton acceptor. Residues Lys290 to Pro299 are compositionally biased toward basic and acidic residues. The segment at Lys290–Ala327 is disordered.

It belongs to the protein kinase superfamily. Ser/Thr protein kinase family.

It carries out the reaction L-seryl-[protein] + ATP = O-phospho-L-seryl-[protein] + ADP + H(+). The catalysed reaction is L-threonyl-[protein] + ATP = O-phospho-L-threonyl-[protein] + ADP + H(+). The chain is Serine/threonine-protein kinase pkn3 (pkn3) from Myxococcus xanthus.